The primary structure comprises 248 residues: tRNA (guanine-N(1)-)-methyltransferase (248 aa).

S-adenosyl-L-methionine is bound by residues glycine 113 and valine 133–leucine 138.

Belongs to the RNA methyltransferase TrmD family. In terms of assembly, homodimer.

It is found in the cytoplasm. It catalyses the reaction guanosine(37) in tRNA + S-adenosyl-L-methionine = N(1)-methylguanosine(37) in tRNA + S-adenosyl-L-homocysteine + H(+). Specifically methylates guanosine-37 in various tRNAs. The sequence is that of tRNA (guanine-N(1)-)-methyltransferase from Shewanella sp. (strain ANA-3).